Reading from the N-terminus, the 464-residue chain is DNA primase DnaG (464 aa).

A Toprim domain is found at 171–245; it reads DTIIIVEGRA…DIDYVARAPK (75 aa). The Mg(2+) site is built by E177, D219, and D221.

Belongs to the archaeal DnaG primase family. Forms a ternary complex with MCM helicase and DNA. The cofactor is Mg(2+).

The enzyme catalyses ssDNA + n NTP = ssDNA/pppN(pN)n-1 hybrid + (n-1) diphosphate.. Its function is as follows. RNA polymerase that catalyzes the synthesis of short RNA molecules used as primers for DNA polymerase during DNA replication. The polypeptide is DNA primase DnaG (Methanococcus aeolicus (strain ATCC BAA-1280 / DSM 17508 / OCM 812 / Nankai-3)).